A 218-amino-acid polypeptide reads, in one-letter code: Putative copper transporter crmD (218 aa).

Helical transmembrane passes span 37 to 57 and 176 to 196; these read YSLTLLFLFALAVFNRFLGVL and MLAVMTFNVGVLCAVVGGIVV.

It belongs to the copper transporter (Ctr) (TC 1.A.56) family. SLC31A subfamily.

The protein resides in the membrane. The catalysed reaction is Cu(2+)(in) = Cu(2+)(out). Functionally, putative copper transporter; part of the crm gene cluster that mediates the biosynthesis of a yet unidentified copper-responsive metabolite. Probably involved in the transport of copper, even if it does not act as a major copper transporter. In contrast to crmA, is not involved in the biosynthesis of fumivalines or fumicicolins. The protein is Putative copper transporter crmD of Aspergillus fumigatus (strain ATCC MYA-4609 / CBS 101355 / FGSC A1100 / Af293) (Neosartorya fumigata).